The sequence spans 245 residues: UDP-2,3-diacylglucosamine hydrolase (245 aa).

Residues Asp-8, His-10, Asp-41, Asn-79, and His-114 each coordinate Mn(2+). Position 79–80 (79–80 (NR)) interacts with substrate. Residues Asp-122, Ser-160, Asn-164, Lys-167, and His-195 each contribute to the substrate site. Residues His-195 and His-197 each coordinate Mn(2+).

This sequence belongs to the LpxH family. It depends on Mn(2+) as a cofactor.

It localises to the cell inner membrane. The catalysed reaction is UDP-2-N,3-O-bis[(3R)-3-hydroxytetradecanoyl]-alpha-D-glucosamine + H2O = 2-N,3-O-bis[(3R)-3-hydroxytetradecanoyl]-alpha-D-glucosaminyl 1-phosphate + UMP + 2 H(+). Its pathway is glycolipid biosynthesis; lipid IV(A) biosynthesis; lipid IV(A) from (3R)-3-hydroxytetradecanoyl-[acyl-carrier-protein] and UDP-N-acetyl-alpha-D-glucosamine: step 4/6. Hydrolyzes the pyrophosphate bond of UDP-2,3-diacylglucosamine to yield 2,3-diacylglucosamine 1-phosphate (lipid X) and UMP by catalyzing the attack of water at the alpha-P atom. Involved in the biosynthesis of lipid A, a phosphorylated glycolipid that anchors the lipopolysaccharide to the outer membrane of the cell. In Photobacterium profundum (strain SS9), this protein is UDP-2,3-diacylglucosamine hydrolase.